Consider the following 67-residue polypeptide: Large ribosomal subunit protein bL35 (67 aa).

This sequence belongs to the bacterial ribosomal protein bL35 family.

The chain is Large ribosomal subunit protein bL35 from Deinococcus geothermalis (strain DSM 11300 / CIP 105573 / AG-3a).